The chain runs to 122 residues: Basic phospholipase A2 Cdr-13 (122 aa).

7 disulfide bridges follow: Cys-26–Cys-115, Cys-28–Cys-44, Cys-43–Cys-95, Cys-49–Cys-122, Cys-50–Cys-88, Cys-57–Cys-81, and Cys-75–Cys-86. Residues Tyr-27, Gly-29, and Gly-31 each coordinate Ca(2+). His-47 is an active-site residue. Ca(2+) is bound at residue Asp-48. Asp-89 is a catalytic residue.

It depends on Ca(2+) as a cofactor. As to expression, expressed by the venom gland.

The protein localises to the secreted. The enzyme catalyses a 1,2-diacyl-sn-glycero-3-phosphocholine + H2O = a 1-acyl-sn-glycero-3-phosphocholine + a fatty acid + H(+). Its function is as follows. Snake venom phospholipase A2 (PLA2) that induces myonecrosis and edema upon subcutaneous injections in mice. In vitro, causes a potent blockade of neuromuscular transmission in young chicken biventer cervicis preparation and produces cytotoxicity in murine C2C12 skeletal muscle myotubes and lack cytolytic activity upon myoblasts in vitro. PLA2 catalyzes the calcium-dependent hydrolysis of the 2-acyl groups in 3-sn-phosphoglycerides. The sequence is that of Basic phospholipase A2 Cdr-13 from Crotalus durissus ruruima (South American rattlesnake).